The primary structure comprises 285 residues: N(G),N(G)-dimethylarginine dimethylaminohydrolase 1 (285 aa).

An N-acetylalanine modification is found at A2. 6 residues coordinate substrate: L30, D73, E78, D79, R98, and R145. Catalysis depends on H173, which acts as the Proton donor. C222 carries the S-nitrosocysteine modification. V268 contacts substrate. At C274 the chain carries S-nitrosocysteine. Residue C274 is the Nucleophile of the active site. Position 274 (C274) interacts with Zn(2+).

As to quaternary structure, monomer. In terms of tissue distribution, widely distributed, highest concentrations found in brain, brain cortex and kidney (at protein level).

The enzyme catalyses N(omega),N(omega)-dimethyl-L-arginine + H2O = dimethylamine + L-citrulline. The catalysed reaction is N(omega)-methyl-L-arginine + H2O = L-citrulline + methylamine. Copurifies with a tightly bound zinc ion. Activated by release of zinc. His and other agents that promote the release of bound zinc ions activate the enzyme (in vitro). Inhibited by S-nitrosylation. Zinc protects the protein against S-nitrosylation. Its function is as follows. Hydrolyzes N(G),N(G)-dimethyl-L-arginine (ADMA) and N(G)-monomethyl-L-arginine (MMA) which act as inhibitors of NOS. Has therefore a role in the regulation of nitric oxide generation. The protein is N(G),N(G)-dimethylarginine dimethylaminohydrolase 1 (DDAH1) of Bos taurus (Bovine).